The primary structure comprises 373 residues: 3-dehydroquinate synthase (373 aa).

Residues 67–72 (EGEETK), 101–105 (GVILD), 125–126 (TT), Lys138, and Lys147 each bind NAD(+). Zn(2+) contacts are provided by Glu180, His240, and His256.

It belongs to the sugar phosphate cyclases superfamily. Dehydroquinate synthase family. NAD(+) is required as a cofactor. Requires Co(2+) as cofactor. Zn(2+) serves as cofactor.

Its subcellular location is the cytoplasm. The catalysed reaction is 7-phospho-2-dehydro-3-deoxy-D-arabino-heptonate = 3-dehydroquinate + phosphate. It functions in the pathway metabolic intermediate biosynthesis; chorismate biosynthesis; chorismate from D-erythrose 4-phosphate and phosphoenolpyruvate: step 2/7. Catalyzes the conversion of 3-deoxy-D-arabino-heptulosonate 7-phosphate (DAHP) to dehydroquinate (DHQ). The chain is 3-dehydroquinate synthase from Chlamydia trachomatis serovar L2 (strain ATCC VR-902B / DSM 19102 / 434/Bu).